Here is a 425-residue protein sequence, read N- to C-terminus: tRNA(Ile)-lysidine synthase (425 aa).

Residue 27–32 (SGGLDS) participates in ATP binding.

Belongs to the tRNA(Ile)-lysidine synthase family.

It is found in the cytoplasm. It catalyses the reaction cytidine(34) in tRNA(Ile2) + L-lysine + ATP = lysidine(34) in tRNA(Ile2) + AMP + diphosphate + H(+). Its function is as follows. Ligates lysine onto the cytidine present at position 34 of the AUA codon-specific tRNA(Ile) that contains the anticodon CAU, in an ATP-dependent manner. Cytidine is converted to lysidine, thus changing the amino acid specificity of the tRNA from methionine to isoleucine. In Streptococcus gordonii (strain Challis / ATCC 35105 / BCRC 15272 / CH1 / DL1 / V288), this protein is tRNA(Ile)-lysidine synthase.